The chain runs to 362 residues: 3-dehydroquinate synthase (362 aa).

Residues 74–79 (DGEGYK), 108–112 (GVIGD), 132–133 (TT), lysine 145, lysine 154, and 172–175 (TLDT) each bind NAD(+). Residues glutamate 187, histidine 250, and histidine 267 each coordinate Zn(2+).

This sequence belongs to the sugar phosphate cyclases superfamily. Dehydroquinate synthase family. Co(2+) is required as a cofactor. Requires Zn(2+) as cofactor. NAD(+) serves as cofactor.

Its subcellular location is the cytoplasm. It carries out the reaction 7-phospho-2-dehydro-3-deoxy-D-arabino-heptonate = 3-dehydroquinate + phosphate. It participates in metabolic intermediate biosynthesis; chorismate biosynthesis; chorismate from D-erythrose 4-phosphate and phosphoenolpyruvate: step 2/7. Catalyzes the conversion of 3-deoxy-D-arabino-heptulosonate 7-phosphate (DAHP) to dehydroquinate (DHQ). This Citrifermentans bemidjiense (strain ATCC BAA-1014 / DSM 16622 / JCM 12645 / Bem) (Geobacter bemidjiensis) protein is 3-dehydroquinate synthase.